The chain runs to 362 residues: Bifunctional nitrilase/nitrile hydratase NIT4 (362 aa).

Positions 31–307 (VRATVVQAST…EALITADLDL (277 aa)) constitute a CN hydrolase domain. Residue Glu71 is the Proton acceptor of the active site. Lys162 acts as the Proton donor in catalysis. The active-site Nucleophile is Cys196.

It belongs to the carbon-nitrogen hydrolase superfamily. Nitrilase family.

It catalyses the reaction a nitrile + 2 H2O = a carboxylate + NH4(+). The catalysed reaction is 3-cyano-L-alanine + 2 H2O = L-aspartate + NH4(+). Its function is as follows. Highly specific for beta-cyano-L-alanine (Ala(CN)). Low activity with 3-phenylpropionitrile (PPN). Not associated with auxin production but may be involved in cyanide detoxification. This chain is Bifunctional nitrilase/nitrile hydratase NIT4 (NIT4), found in Oryza sativa subsp. japonica (Rice).